Reading from the N-terminus, the 105-residue chain is MKMIKAIVRPDKVDDIVDSLENAGYPAFTKINSVGRGKQGGLKVGEIFYDELPKTILLIAVNDDEVDEVVGLIKSSASTGNFGDGKIFIQPITEAYTIRTGETGI.

Belongs to the P(II) protein family.

Could be involved in the regulation of nitrogen fixation. This Methanothermococcus thermolithotrophicus (Methanococcus thermolithotrophicus) protein is Nitrogen fixation nifHD region GlnB-like protein 1 (glnBA).